The following is a 976-amino-acid chain: Leucine--tRNA ligase (976 aa).

The 'HIGH' region motif lies at 63 to 74; the sequence is PYPSGVGLHVGH. The 'KMSKS' region signature appears at 745–749; sequence KMGKS. Position 748 (Lys-748) interacts with ATP.

This sequence belongs to the class-I aminoacyl-tRNA synthetase family.

It localises to the cytoplasm. It carries out the reaction tRNA(Leu) + L-leucine + ATP = L-leucyl-tRNA(Leu) + AMP + diphosphate. The polypeptide is Leucine--tRNA ligase (Corynebacterium jeikeium (strain K411)).